The sequence spans 482 residues: E3 ubiquitin-protein ligase parkin (482 aa).

The Ubiquitin-like domain maps to 30 to 99 (LSIYVKTNTG…LGQQSVLHAI (70 aa)). Phosphoserine; by Pink1 is present on S94. The RING-type 0; atypical zinc-finger motif lies at 157-246 (AHFFVHCSQC…SGGEKDFAAP (90 aa)). Zn(2+) contacts are provided by C163, C166, C178, and C181. T187 is modified (phosphothreonine; by Pink1). The Zn(2+) site is built by C208, C232, H235, C259, C262, C274, H278, C281, C284, C310, C314, C353, C358, C373, C377, C382, C385, H390, C394, C436, and C439. Residues 255–482 (KNVPCLACTD…RDCMGAHWFG (228 aa)) are TRIAD supradomain. The RING-type 1 zinc-finger motif lies at 259–314 (CLACTDVSDTVLVFPCASQHVTCIDCFRHYCRSRLGERQFMPHPDFGYTLPCPAGC). 2 IBR-type zinc fingers span residues 334 to 394 (DRYQ…IGEC) and 432 to 473 (STKP…EWTR). The RING-type 2; atypical zinc-finger motif lies at 436 to 467 (CPKCRTPTERDGGCMHMVCTRAGCGFEWCWVC). C449 is a catalytic residue. 6 residues coordinate Zn(2+): C454, C459, C464, C467, C475, and H479.

The protein belongs to the RBR family. Parkin subfamily. As to quaternary structure, forms an E3 ubiquitin ligase complex with E2 ubiquitin-conjugating enzymes. Interacts with Pink1. Interacts with Marf. Interacts with Paris. Interacts with septins Septin1 and pnut. In terms of processing, auto-ubiquitinates in an E2-dependent manner leading to its own degradation. Post-translationally, phosphorylated. Activation requires phosphorylation at Ser-94 by Pink1 and binding to Pink1-phosphorylated polyubiquitin chains. Phosphorylation at Thr-187 by Pink1 is also important for mitochondrial localization. As to expression, in oocytes, accumulates in early egg chambers where it is enriched until stages 9-10, localizing mainly to the posterior pole and anterior margin (at protein level). After stage 10 it is no longer detected in the oocyte (at protein level). In embryos, ubiquitously expressed in the early stages (stages 2 to 5) (at protein level). Expression levels decrease at later stages and becomes restricted to the brain and nerve cord from stage 9 (at protein level). Relatively higher levels of expression in the head compared to the body. Enriched in the dorsomedial (DM) dopaminergic neurons.

It is found in the mitochondrion. The protein resides in the cytoplasm. It localises to the cytosol. The enzyme catalyses [E2 ubiquitin-conjugating enzyme]-S-ubiquitinyl-L-cysteine + [acceptor protein]-L-lysine = [E2 ubiquitin-conjugating enzyme]-L-cysteine + [acceptor protein]-N(6)-ubiquitinyl-L-lysine.. It functions in the pathway protein modification; protein ubiquitination. With respect to regulation, in the autoinhibited state the side chain of Phe-481 inserts into a hydrophobic groove in RING-0, occluding the ubiquitin acceptor site Cys-449, whereas the REP repressor element binds RING-1 and blocks its E2-binding site. Activation of park requires 2 steps: (1) phosphorylation at Ser-94 by Pink1 and (2) binding to phosphorylated ubiquitin, leading to unlock repression of the catalytic Cys-449 by the RING-0 region via an allosteric mechanism and converting park to its fully-active form. According to another report, phosphorylation at Ser-94 by Pink1 is not essential for activation and only binding to phosphorylated ubiquitin is essential to unlock repression. Its function is as follows. E3 ubiquitin-protein ligase which accepts ubiquitin from E2 ubiquitin-conjugating enzymes in the form of a thioester and then directly transfers the ubiquitin to targeted substrates, such as Paris, Marf, Opa1, Miro, pnut, Septin1, Tom20 and porin. Mediates monoubiquitination as well as 'Lys-6', 'Lys-11', 'Lys-48'-linked and 'Lys-63'-linked polyubiquitination of substrates, depending on the context. Protects against mitochondrial dysfunction during cellular stress, by acting downstream of Pink1, to coordinate mitochondrial quality control mechanisms that remove and replace dysfunctional mitochondrial components. Depending on the severity of mitochondrial damage and/or dysfunction, activity ranges from preventing apoptosis and stimulating mitochondrial biogenesis to regulating mitochondrial dynamics and eliminating severely damaged mitochondria via mitophagy. Appears to be particularly important in maintaining the physiology and function of cells with high energy demands that are undergoing stress or altered metabolic environment, including spermatids, muscle cells and neurons such as the dopaminergic (DA) neurons. Activation and recruitment onto the outer membrane of damaged/dysfunctional mitochondria (OMM) requires Pink1-mediated phosphorylation of both park and ubiquitin. In depolarized mitochondria, mediates the decision between mitophagy or preventing apoptosis by inducing either the poly- or monoubiquitination of porin/VDAC; polyubiquitination of porin promotes mitophagy, while monoubiquitination of porin decreases mitochondrial calcium influx which ultimately inhibits apoptosis. When cellular stress results in irreversible mitochondrial damage, promotes the autophagic degradation of dysfunctional depolarized mitochondria (mitophagy) by promoting the ubiquitination of mitochondrial proteins. Preferentially assembles 'Lys-6'-, 'Lys-11'- and 'Lys-63'-linked polyubiquitin chains following mitochondrial damage, leading to mitophagy. In developing tissues, inhibits JNK-mediated apoptosis by negatively regulating bsk transcription. The Pink1-park pathway also promotes fission and/or inhibits fusion of damaged mitochondria by mediating the ubiquitination and subsequent degradation of proteins involved in mitochondrial fusion/fission such as Marf, Opa1 and fzo. This prevents the refusion of unhealthy mitochondria with the healthy mitochondrial network and/or initiates mitochondrial fragmentation facilitating their later engulfment by autophagosomes. Regulates motility of damaged mitochondria by phosphorylating Miro which likely promotes its park-dependent degradation by the proteasome; in motor neurons, this inhibits mitochondrial intracellular anterograde transport along the axons which probably increases the chance of the mitochondria being eliminated in the soma. The Pink1-park pathway is also involved in mitochondrial regeneration processes such as promoting mitochondrial biogenesis, activating localized mitochondrial repair, promoting selective turnover of mitochondrial proteins and initiating the mitochondrial import of endogenous proteins. Involved in mitochondrial biogenesis via the ubiquitination of transcriptional repressor Paris which leads to its subsequent proteasomal degradation and allows activation of the transcription factor srl. Promotes localized mitochondrial repair by activating the translation of specific nuclear-encoded mitochondrial RNAs (nc-mtRNAs) on the mitochondrial surface, including several key electron transport chain component nc-mtRNAs. This chain is E3 ubiquitin-protein ligase parkin, found in Drosophila melanogaster (Fruit fly).